A 567-amino-acid chain; its full sequence is Protein ESMERALDA 1 (567 aa).

Positions 1-41 are disordered; sequence MLAKNRLPGSGHTTPSPPASPRRSPRYRHGRSKAAAGSRFP. The Cytoplasmic segment spans residues 1–65; that stretch reads MLAKNRLPGS…ILLSVLLRRQ (65 aa). The segment covering 23-32 has biased composition (basic residues); sequence RSPRYRHGRS. Residues 66–86 traverse the membrane as a helical; Signal-anchor for type II membrane protein segment; that stretch reads GIFLFAPLIYISCMLLYMGTV. The Lumenal portion of the chain corresponds to 87–567; that stretch reads SFDVVPIIQR…TPESRPPPAT (481 aa). N-linked (GlcNAc...) asparagine glycans are attached at residues N121, N145, N184, and N238. Substrate is bound at residue 331–333; the sequence is HLR. Residues N403, N419, N449, N538, and N554 are each glycosylated (N-linked (GlcNAc...) asparagine).

The protein belongs to the glycosyltransferase GT106 family. As to expression, ubiquitous.

The protein localises to the golgi apparatus membrane. Its pathway is protein modification; protein glycosylation. Glycosyltransferase that plays a role in cell adhesion. This is Protein ESMERALDA 1 from Arabidopsis thaliana (Mouse-ear cress).